Consider the following 150-residue polypeptide: Transthyretin (150 aa).

The N-terminal stretch at 1 to 20 (MGSSSLLLVCLAGMVYLTEA) is a signal peptide. Cys-33 is modified (sulfocysteine). L-thyroxine-binding residues include Lys-38, Glu-77, and Ser-140.

The protein belongs to the transthyretin family. Homotetramer. Dimer of dimers. In the homotetramer, subunits assemble around a central channel that can accommodate two ligand molecules. Interacts with RBP4. Post-translationally, sulfonation of the reactive cysteine Cys-33 enhances the stability of the native conformation of TTR, avoiding misassembly of the protein leading to amyloid formation. In terms of tissue distribution, detected in choroid plexus (at protein level). Detected in choroid plexus.

The protein resides in the secreted. Its function is as follows. Thyroid hormone-binding protein. Probably transports thyroxine from the bloodstream to the brain. In Tiliqua rugosa (Shingleback lizard), this protein is Transthyretin (TTR).